A 344-amino-acid chain; its full sequence is 4-hydroxy-3-methylbut-2-en-1-yl diphosphate synthase (flavodoxin) (344 aa).

4 residues coordinate [4Fe-4S] cluster: Cys253, Cys256, Cys288, and Glu295.

The protein belongs to the IspG family. [4Fe-4S] cluster is required as a cofactor.

The enzyme catalyses (2E)-4-hydroxy-3-methylbut-2-enyl diphosphate + oxidized [flavodoxin] + H2O + 2 H(+) = 2-C-methyl-D-erythritol 2,4-cyclic diphosphate + reduced [flavodoxin]. It participates in isoprenoid biosynthesis; isopentenyl diphosphate biosynthesis via DXP pathway; isopentenyl diphosphate from 1-deoxy-D-xylulose 5-phosphate: step 5/6. Functionally, converts 2C-methyl-D-erythritol 2,4-cyclodiphosphate (ME-2,4cPP) into 1-hydroxy-2-methyl-2-(E)-butenyl 4-diphosphate. The chain is 4-hydroxy-3-methylbut-2-en-1-yl diphosphate synthase (flavodoxin) from Thermotoga petrophila (strain ATCC BAA-488 / DSM 13995 / JCM 10881 / RKU-1).